The chain runs to 432 residues: Amino-acid acetyltransferase (432 aa).

One can recognise an N-acetyltransferase domain in the interval 286-425 (EVVREASIED…ASLYNYQRNS (140 aa)).

It belongs to the acetyltransferase family. ArgA subfamily.

It localises to the cytoplasm. The catalysed reaction is L-glutamate + acetyl-CoA = N-acetyl-L-glutamate + CoA + H(+). Its pathway is amino-acid biosynthesis; L-arginine biosynthesis; N(2)-acetyl-L-ornithine from L-glutamate: step 1/4. The polypeptide is Amino-acid acetyltransferase (Pseudomonas putida (strain GB-1)).